Reading from the N-terminus, the 27-residue chain is Delta-conotoxin TsVIA (27 aa).

Disulfide bonds link C1–C17, C8–C21, and C16–C25.

The protein belongs to the conotoxin O1 superfamily. As to expression, expressed by the venom duct.

It is found in the secreted. Delta-conotoxins bind to site 6 of voltage-gated sodium channels (Nav) and inhibit the inactivation process. This toxin inhibits tetrodotoxin(TTX)-sensitive sodium channels. A test on mouse Nav1.6/SCN8A confirms this sensitivity. This is Delta-conotoxin TsVIA from Conus tessulatus (Tessellate cone).